The primary structure comprises 1219 residues: DNA ligase 4 (1219 aa).

Residues E251, K253, R258, R273, E303, F342, E418, K423, R434, K440, and K442 each coordinate ATP. Catalysis depends on K253, which acts as the N6-AMP-lysine intermediate. Residue E303 coordinates Mg(2+). E418 is a Mg(2+) binding site. The segment at 604-632 (NGTTQKQKESESTQDNPKVNKSSKRGEKK) is disordered. 2 consecutive BRCT domains span residues 651 to 739 (GKTS…PKYF) and 807 to 909 (VYFY…VYTL). Disordered regions lie at residues 914 to 1126 (MEES…MDMK) and 1146 to 1197 (IPSQ…SDVV). Over residues 932–960 (VASQGSAQTKEPASSKIAITSSRGRSNTR) the composition is skewed to polar residues. The span at 1042 to 1051 (QRSRRGKKAA) shows a compositional bias: basic residues. Acidic residues predominate over residues 1056–1065 (DESDENDELD). Basic and acidic residues-rich tracts occupy residues 1084 to 1096 (VENEETREPDIAK) and 1117 to 1126 (RNAKTEMDMK). Polar residues predominate over residues 1148-1159 (SQKTTETSNRTT).

It belongs to the ATP-dependent DNA ligase family. In terms of assembly, interacts with XRCC4 via its tandem BRCT domains. Interacts with POLL. Requires Mg(2+) as cofactor. In terms of tissue distribution, widely expressed, with higher levels in young flowers and roots.

The protein localises to the nucleus. The enzyme catalyses ATP + (deoxyribonucleotide)n-3'-hydroxyl + 5'-phospho-(deoxyribonucleotide)m = (deoxyribonucleotide)n+m + AMP + diphosphate.. DNA ligase involved in DNA non-homologous end joining (NHEJ); required for double-strand break (DSB) repair. May be involved for T-DNA integration even if not absolutely required. Seems to be dispensable under normal growth conditions. The sequence is that of DNA ligase 4 (LIG4) from Arabidopsis thaliana (Mouse-ear cress).